The chain runs to 222 residues: Chalcone--flavanone isomerase 1 (222 aa).

3 residues coordinate substrate: Thr48, Asn113, and Thr190.

The protein belongs to the chalcone isomerase family.

The catalysed reaction is a chalcone = a flavanone.. The protein operates within secondary metabolite biosynthesis; flavonoid biosynthesis. Its function is as follows. Catalyzes the intramolecular cyclization of bicyclic chalcones into tricyclic (S)-flavanones. Responsible for the isomerization of 4,2',4',6'-tetrahydroxychalcone (also termed chalcone) into naringenin. This chain is Chalcone--flavanone isomerase 1 (CHI1), found in Medicago sativa (Alfalfa).